Here is a 194-residue protein sequence, read N- to C-terminus: Large ribosomal subunit protein uL22 (194 aa).

Belongs to the universal ribosomal protein uL22 family.

The chain is Large ribosomal subunit protein uL22 (rpl17) from Aspergillus fumigatus (strain ATCC MYA-4609 / CBS 101355 / FGSC A1100 / Af293) (Neosartorya fumigata).